A 435-amino-acid polypeptide reads, in one-letter code: Enolase (435 aa).

Q163 lines the (2R)-2-phosphoglycerate pocket. Residue E205 is the Proton donor of the active site. 3 residues coordinate Mg(2+): D243, E292, and D319. Residues K344, R373, S374, and K395 each coordinate (2R)-2-phosphoglycerate. The active-site Proton acceptor is the K344.

It belongs to the enolase family. Mg(2+) is required as a cofactor.

The protein resides in the cytoplasm. Its subcellular location is the secreted. It is found in the cell surface. The catalysed reaction is (2R)-2-phosphoglycerate = phosphoenolpyruvate + H2O. The protein operates within carbohydrate degradation; glycolysis; pyruvate from D-glyceraldehyde 3-phosphate: step 4/5. Functionally, catalyzes the reversible conversion of 2-phosphoglycerate (2-PG) into phosphoenolpyruvate (PEP). It is essential for the degradation of carbohydrates via glycolysis. In Streptococcus equi subsp. zooepidemicus (strain MGCS10565), this protein is Enolase.